A 103-amino-acid chain; its full sequence is MVYAIVRAGGRQEKVAVGDVLTIDRVPVASGETLQLQPLLLVDGETVTHDASALAGVKVVAEVVEEAKGPKITILKYKNKTGYRKRQGHRQPLTRVKITSIGE.

Belongs to the bacterial ribosomal protein bL21 family. In terms of assembly, part of the 50S ribosomal subunit. Contacts protein L20.

Functionally, this protein binds to 23S rRNA in the presence of protein L20. In Kineococcus radiotolerans (strain ATCC BAA-149 / DSM 14245 / SRS30216), this protein is Large ribosomal subunit protein bL21.